The sequence spans 215 residues: Cytochrome c biogenesis ATP-binding export protein CcmA (215 aa).

In terms of domain architecture, ABC transporter spans 3 to 211; the sequence is LTAEILAARR…KMTGFAGVDN (209 aa). Residue 35 to 42 participates in ATP binding; the sequence is GKNGSGKS.

The protein belongs to the ABC transporter superfamily. CcmA exporter (TC 3.A.1.107) family. As to quaternary structure, the complex is composed of two ATP-binding proteins (CcmA) and two transmembrane proteins (CcmB).

The protein resides in the cell inner membrane. It catalyses the reaction heme b(in) + ATP + H2O = heme b(out) + ADP + phosphate + H(+). In terms of biological role, part of the ABC transporter complex CcmAB involved in the biogenesis of c-type cytochromes; once thought to export heme, this seems not to be the case, but its exact role is uncertain. Responsible for energy coupling to the transport system. The protein is Cytochrome c biogenesis ATP-binding export protein CcmA of Rhizobium johnstonii (strain DSM 114642 / LMG 32736 / 3841) (Rhizobium leguminosarum bv. viciae).